Consider the following 669-residue polypeptide: UvrABC system protein B (669 aa).

The Helicase ATP-binding domain occupies 26 to 414; the sequence is EGLEDGLAHQ…SGDVVEQVVR (389 aa). Residue 39 to 46 participates in ATP binding; the sequence is GVTGSGKT. Residues 92–115 carry the Beta-hairpin motif; sequence YYDYYQPEAYVPSSDTFIEKDASV. A Helicase C-terminal domain is found at 431–597; it reads QVDDLLSEIR…GLNKKINDIL (167 aa). In terms of domain architecture, UVR spans 629 to 664; sequence ESKIRELEAKMYQHAQDLEFEQAASVRDQVQALREQ.

It belongs to the UvrB family. In terms of assembly, forms a heterotetramer with UvrA during the search for lesions. Interacts with UvrC in an incision complex.

It is found in the cytoplasm. Functionally, the UvrABC repair system catalyzes the recognition and processing of DNA lesions. A damage recognition complex composed of 2 UvrA and 2 UvrB subunits scans DNA for abnormalities. Upon binding of the UvrA(2)B(2) complex to a putative damaged site, the DNA wraps around one UvrB monomer. DNA wrap is dependent on ATP binding by UvrB and probably causes local melting of the DNA helix, facilitating insertion of UvrB beta-hairpin between the DNA strands. Then UvrB probes one DNA strand for the presence of a lesion. If a lesion is found the UvrA subunits dissociate and the UvrB-DNA preincision complex is formed. This complex is subsequently bound by UvrC and the second UvrB is released. If no lesion is found, the DNA wraps around the other UvrB subunit that will check the other stand for damage. This is UvrABC system protein B from Photorhabdus laumondii subsp. laumondii (strain DSM 15139 / CIP 105565 / TT01) (Photorhabdus luminescens subsp. laumondii).